Here is a 369-residue protein sequence, read N- to C-terminus: 3-dehydroquinate synthase (369 aa).

Residues 75–80 (DGEEHK), 109–113 (GVIGD), 133–134 (TT), Lys-146, Lys-155, and 173–176 (TLKT) each bind NAD(+). Zn(2+) contacts are provided by Glu-188, His-251, and His-268.

Belongs to the sugar phosphate cyclases superfamily. Dehydroquinate synthase family. Co(2+) serves as cofactor. Requires Zn(2+) as cofactor. NAD(+) is required as a cofactor.

It is found in the cytoplasm. The catalysed reaction is 7-phospho-2-dehydro-3-deoxy-D-arabino-heptonate = 3-dehydroquinate + phosphate. Its pathway is metabolic intermediate biosynthesis; chorismate biosynthesis; chorismate from D-erythrose 4-phosphate and phosphoenolpyruvate: step 2/7. Catalyzes the conversion of 3-deoxy-D-arabino-heptulosonate 7-phosphate (DAHP) to dehydroquinate (DHQ). The sequence is that of 3-dehydroquinate synthase from Legionella pneumophila subsp. pneumophila (strain Philadelphia 1 / ATCC 33152 / DSM 7513).